A 589-amino-acid polypeptide reads, in one-letter code: Ufm1-specific protease (589 aa).

A disordered region spans residues 1–22 (MTNSQTVSLIGPTQMAPQSTPP). Active-site residues include Cys-421, Asp-545, and His-547.

The protein belongs to the peptidase C78 family. Interacts with odr-4. As to expression, expressed in head and tail neurons. Expressed in the amphid head neurons ADL, ASI, ASH, ASJ, ASG, ADF, ASK, AWA, AWB, AWC, and in two tail neurons, the phasmid tail neurons PHA and PHB.

Its subcellular location is the endoplasmic reticulum membrane. The protein resides in the cytoplasm. It is found in the perinuclear region. Thiol protease which recognizes and hydrolyzes the peptide bond at the C-terminal Gly of ufm-1, a ubiquitin-like modifier protein bound to a number of target proteins. Required, with oct-4, for the localization of a subset of 7 transmembrane domain odorant receptors, including odr-10, to the cilia of olfactory neurons AWA and AWC. Operates in aggregation behavior, and responses to oxygen levels. This Caenorhabditis elegans protein is Ufm1-specific protease.